A 302-amino-acid polypeptide reads, in one-letter code: Proteasome subunit beta (302 aa).

Residues 1-50 (MTITGSRGFPDGYLAPGSSFLDFAAQHAPTIMPGTQPTFDTIPQDIAPHG) constitute a propeptide, removed in mature form; by autocatalysis. Thr-51 functions as the Nucleophile in the catalytic mechanism. Residues 277 to 302 (EPGRDGPGNRLPSQGSATIIPESDQS) form a disordered region. The segment covering 287 to 302 (LPSQGSATIIPESDQS) has biased composition (polar residues).

It belongs to the peptidase T1B family. The 20S proteasome core is composed of 14 alpha and 14 beta subunits that assemble into four stacked heptameric rings, resulting in a barrel-shaped structure. The two inner rings, each composed of seven catalytic beta subunits, are sandwiched by two outer rings, each composed of seven alpha subunits. The catalytic chamber with the active sites is on the inside of the barrel. Has a gated structure, the ends of the cylinder being occluded by the N-termini of the alpha-subunits. Is capped by the proteasome-associated ATPase, ARC.

It localises to the cytoplasm. It catalyses the reaction Cleavage of peptide bonds with very broad specificity.. It participates in protein degradation; proteasomal Pup-dependent pathway. The formation of the proteasomal ATPase ARC-20S proteasome complex, likely via the docking of the C-termini of ARC into the intersubunit pockets in the alpha-rings, may trigger opening of the gate for substrate entry. Interconversion between the open-gate and close-gate conformations leads to a dynamic regulation of the 20S proteasome proteolysis activity. Component of the proteasome core, a large protease complex with broad specificity involved in protein degradation. The protein is Proteasome subunit beta of Jonesia denitrificans (strain ATCC 14870 / DSM 20603 / BCRC 15368 / CIP 55.134 / JCM 11481 / NBRC 15587 / NCTC 10816 / Prevot 55134) (Listeria denitrificans).